Here is a 79-residue protein sequence, read N- to C-terminus: RNA-binding protein Hfq (79 aa).

Residues 10–69 (DPFLNALRKEHVPVSIYLVNGIKLQGNIESFDQYVVLLRNTVTQMVYKHAISTVVPARPV) enclose the Sm domain.

It belongs to the Hfq family. In terms of assembly, homohexamer.

Functionally, RNA chaperone that binds small regulatory RNA (sRNAs) and mRNAs to facilitate mRNA translational regulation in response to envelope stress, environmental stress and changes in metabolite concentrations. Also binds with high specificity to tRNAs. This Burkholderia mallei (strain ATCC 23344) protein is RNA-binding protein Hfq.